A 168-amino-acid chain; its full sequence is MKILVIQGPNLNMLGHRDPRLYGMVTLDQIHEIMQTFVKQSNLDVELEFFQTNFEGEIIDKIQESVGSDYEGIIINPGAFSHTSIAIADAIMLAGKPVIEVHLTNIQAREEFRKNSYTGAACGGVIMGFGPLGYNMALMAMVNILAEMKAFQEAQQNNPNNSINNINN.

Tyr-22 functions as the Proton acceptor in the catalytic mechanism. Substrate is bound by residues Asn-76, His-82, and Asp-89. The active-site Proton donor is His-102. Substrate contacts are provided by residues 103-104 (LT) and Arg-113.

Belongs to the type-II 3-dehydroquinase family. Homododecamer.

It carries out the reaction 3-dehydroquinate = 3-dehydroshikimate + H2O. The protein operates within metabolic intermediate biosynthesis; chorismate biosynthesis; chorismate from D-erythrose 4-phosphate and phosphoenolpyruvate: step 3/7. Functionally, catalyzes a trans-dehydration via an enolate intermediate. The sequence is that of 3-dehydroquinate dehydratase from Helicobacter acinonychis (strain Sheeba).